The sequence spans 216 residues: ATP phosphoribosyltransferase (216 aa).

This sequence belongs to the ATP phosphoribosyltransferase family. Short subfamily. In terms of assembly, heteromultimer composed of HisG and HisZ subunits.

The protein resides in the cytoplasm. The catalysed reaction is 1-(5-phospho-beta-D-ribosyl)-ATP + diphosphate = 5-phospho-alpha-D-ribose 1-diphosphate + ATP. It participates in amino-acid biosynthesis; L-histidine biosynthesis; L-histidine from 5-phospho-alpha-D-ribose 1-diphosphate: step 1/9. Its function is as follows. Catalyzes the condensation of ATP and 5-phosphoribose 1-diphosphate to form N'-(5'-phosphoribosyl)-ATP (PR-ATP). Has a crucial role in the pathway because the rate of histidine biosynthesis seems to be controlled primarily by regulation of HisG enzymatic activity. The polypeptide is ATP phosphoribosyltransferase (Rubrobacter xylanophilus (strain DSM 9941 / JCM 11954 / NBRC 16129 / PRD-1)).